The sequence spans 362 residues: Peptide chain release factor 1 (362 aa).

Residue Q237 is modified to N5-methylglutamine.

This sequence belongs to the prokaryotic/mitochondrial release factor family. Post-translationally, methylated by PrmC. Methylation increases the termination efficiency of RF1.

Its subcellular location is the cytoplasm. Peptide chain release factor 1 directs the termination of translation in response to the peptide chain termination codons UAG and UAA. In Vibrio atlanticus (strain LGP32) (Vibrio splendidus (strain Mel32)), this protein is Peptide chain release factor 1.